The sequence spans 144 residues: Small ribosomal subunit protein bS6 (144 aa).

The tract at residues aspartate 97–alanine 144 is disordered. Over residues lysine 105–aspartate 124 the composition is skewed to basic and acidic residues.

Belongs to the bacterial ribosomal protein bS6 family.

Binds together with bS18 to 16S ribosomal RNA. This chain is Small ribosomal subunit protein bS6, found in Xanthomonas campestris pv. campestris (strain 8004).